The chain runs to 446 residues: MSNESFPETLENLLSTLQTKQQNAIQSEVIEWLHSFCETFHLKIHCHKQFIPSGEKKWAKIPTQETQENTQPHVQRVVLSRAQPLKVQESLLTTMCNGLVLDANTWTCLAVPPPAPFQQVTRQIQHYYRNNFYEVVPIQDGTLLTIYYWDDPEHGPSWCLASTHGYDVSNYCWIGDKTFAELVYELLQQHSTCDVTLEKKQTRGTRLFFNNLNRDYCYTIGIRHHNLQPLIYDPQNIWAIQTTNLKTLKTVYPEYHGYVGIPGIQSQVPELPQYELPYLIRSYKTAMNQAKNAIKNGKKDKGYFNYGYLLVSRAPAITKSISTVLLKSPLLVFLQKSVYQKKHNLTSSLRLEFIILQNYLMQHFRDNFIALFPQYISYYTKYQNMLNMIIHSIAIKDIDHPFAGTVVKKVLEDIENAENIIDHTTIQNYVHQSKYAMLYLSIISHF.

This sequence belongs to the asfivirus M448R family.

It is found in the virion. In African swine fever virus (isolate Tick/Malawi/Lil 20-1/1983) (ASFV), this protein is Putative RNA-ligase.